The primary structure comprises 850 residues: DNA mismatch repair protein MutS (850 aa).

Residue 608-615 participates in ATP binding; sequence GPNMGGKS.

This sequence belongs to the DNA mismatch repair MutS family.

Its function is as follows. This protein is involved in the repair of mismatches in DNA. It is possible that it carries out the mismatch recognition step. This protein has a weak ATPase activity. The chain is DNA mismatch repair protein MutS from Thiobacillus denitrificans (strain ATCC 25259 / T1).